We begin with the raw amino-acid sequence, 294 residues long: Protoheme IX farnesyltransferase (294 aa).

9 helical membrane-spanning segments follow: residues 24–44 (VVLL…PGWV), 48–68 (LIAF…AINH), 96–116 (ALWF…LFVN), 118–138 (LTAL…TGYL), 146–166 (IVIG…AVTG), 172–192 (ALLL…ALAI), 224–244 (VLLL…WIYL), 245–265 (LGAL…YFTD), and 268–288 (VVAM…FVFL).

This sequence belongs to the UbiA prenyltransferase family. Protoheme IX farnesyltransferase subfamily.

The protein resides in the cell inner membrane. It carries out the reaction heme b + (2E,6E)-farnesyl diphosphate + H2O = Fe(II)-heme o + diphosphate. Its pathway is porphyrin-containing compound metabolism; heme O biosynthesis; heme O from protoheme: step 1/1. Converts heme B (protoheme IX) to heme O by substitution of the vinyl group on carbon 2 of heme B porphyrin ring with a hydroxyethyl farnesyl side group. The chain is Protoheme IX farnesyltransferase from Legionella pneumophila (strain Paris).